Here is a 295-residue protein sequence, read N- to C-terminus: Translational activator of cytochrome c oxidase 1 (295 aa).

Lys162 bears the N6-acetyllysine mark. Residues 190 to 225 (VEDREKKAVNLERALELAIEAGAEDVREAEDEEEEK) adopt a coiled-coil conformation.

It belongs to the TACO1 family.

The protein localises to the mitochondrion. Acts as a translational activator of mitochondrially-encoded cytochrome c oxidase 1. In Rattus norvegicus (Rat), this protein is Translational activator of cytochrome c oxidase 1.